The sequence spans 515 residues: Zinc metalloproteinase-disintegrin-like EoMP06 (515 aa).

Positions 1–94 (VEDHCYYHGR…TLGLIVPPHG (94 aa)) are excised as a propeptide. At Gln95 the chain carries Pyrrolidone carboxylic acid. The Peptidase M12B domain occupies 100 to 296 (KFIELIIVVD…YNPKCIVDPP (197 aa)). Residue Glu103 participates in Ca(2+) binding. Residue Asn160 is glycosylated (N-linked (GlcNAc...) asparagine). Ca(2+) is bound at residue Asp187. N-linked (GlcNAc...) asparagine glycans are attached at residues Asn194 and Asn225. Cystine bridges form between Cys211-Cys291, Cys251-Cys275, and Cys253-Cys258. His236 provides a ligand contact to Zn(2+). Glu237 is a catalytic residue. Residues His240 and His246 each coordinate Zn(2+). Residues Cys291, Val306, Asn309, Val311, Glu313, Glu316, and Asp319 each coordinate Ca(2+). In terms of domain architecture, Disintegrin spans 304 to 390 (PAVCGNGVWE…ECPRNEFQRN (87 aa)). Intrachain disulfides connect Cys307–Cys336, Cys318–Cys331, Cys320–Cys326, Cys330–Cys353, Cys344–Cys350, Cys349–Cys375, Cys362–Cys382, Cys369–Cys401, Cys394–Cys406, Cys413–Cys466, Cys428–Cys477, Cys441–Cys454, Cys461–Cys503, and Cys497–Cys508. The D/ECD-tripeptide motif lies at 368-370 (DCD). Residues Asp370, Val371, and Asn385 each coordinate Ca(2+).

It belongs to the venom metalloproteinase (M12B) family. P-III subfamily. P-IIIa sub-subfamily. Monomer. Zn(2+) is required as a cofactor. As to expression, expressed by the venom gland.

It is found in the secreted. Its function is as follows. Snake venom zinc metalloproteinase that catalyzes the conversion of prothrombin (F2) to alpha-thrombin through formation of a thrombin intermediate, thereby functioning as a procoagulant protein. The polypeptide is Zinc metalloproteinase-disintegrin-like EoMP06 (Echis ocellatus (Ocellated saw-scaled viper)).